Consider the following 134-residue polypeptide: Early E3B 14.9 kDa protein (134 aa).

The first 19 residues, 1–19 (MQAMLPVILILLLPCIALA), serve as a signal peptide directing secretion. The helical transmembrane segment at 54-78 (YWIVIVGIINILSCTFFSITIYPTF) threads the bilayer.

This sequence belongs to the adenoviridae E3_14 family. Phosphorylated on serine; O-glycosylated, but not N-glycosylated.

The protein localises to the host membrane. Down-regulates the EGF receptor and prevents cytolysis by TNF. The chain is Early E3B 14.9 kDa protein from Homo sapiens (Human).